The following is a 396-amino-acid chain: MRECRSQEASGQLTFAKTPRTVGIEEEFHLVDLTTRRLATRAPELLPLLPDGYVAELQSCVVETNGSVVSTLPELRADLTARRRVLVDTAATLGLGVVAAGAVPLSVPSEMRVTQTSRYQQMLADYQLLAREQLICGTQIHVGIDDPDESVLVAGRVAAYVPTLLALSASSPFWSDGSDTGYSSVRTLVWQRWPTTGLAPPATSAAEYDALISDLIATGVITDAGMSYFDVRPALRTPTLELRVCDSCPRADTIVLIAALFRALVEREIEGLRAGVPAAIVVPPLGRAALWRAARSGLEGDLVDLIHPASRPAGDVVTDLVQMLRPQLEASRDWQTVEELARRALAEGSSAARQRRAMRMRNSLLDVVDHLIAETADVATVANDALPTQRNGSDRG.

Belongs to the glutamate--cysteine ligase type 2 family. YbdK subfamily.

The enzyme catalyses L-cysteine + L-glutamate + ATP = gamma-L-glutamyl-L-cysteine + ADP + phosphate + H(+). Its function is as follows. ATP-dependent carboxylate-amine ligase which exhibits weak glutamate--cysteine ligase activity. The polypeptide is Putative glutamate--cysteine ligase 2-2 (Mycolicibacterium smegmatis (strain ATCC 700084 / mc(2)155) (Mycobacterium smegmatis)).